The sequence spans 260 residues: Transmembrane protein 106C (260 aa).

The N-myristoyl glycine moiety is linked to residue glycine 2. The chain crosses the membrane as a helical span at residues 85-105 (YVLLSVLLCLLASGLVFFFLF). A glycan (N-linked (GlcNAc...) asparagine) is linked at asparagine 184. The chain crosses the membrane as a helical span at residues 196-216 (SYVYFYCTLPAIRVHNIVIFM).

Belongs to the TMEM106 family. As to quaternary structure, interacts with TMEM106B.

The protein resides in the endoplasmic reticulum membrane. Its subcellular location is the membrane. The protein is Transmembrane protein 106C (Tmem106c) of Mus musculus (Mouse).